Reading from the N-terminus, the 518-residue chain is MRAGRRVAISAGSLAVLLGALDTYVVVTIMRDIMNSVGIPINQLHRITWIVTMYLLGYIAAMPLLGRASDRFGRKLMLQVSLAGFIIGSVVTALAGHFGDFHMLIAGRTIQGVASGALLPITLALGADLWSQRNRAGVLGGIGAAQELGSVLGPLYGIFIVWLLHDWRDVFWINVPLTAIAMVMIHFSLPSHDRSTEPERVDLVGGLLLALALGLAVIGLYNPNPDGKHVLPDYGAPLLVGALVAAVAFFGWERFARTRLIDPAGVHFRPFLSALGASVAAGAALMVTLVDVELFGQGVLQMDQAQAAGMLLWFLIALPIGAVTGGWIATRAGDRAVAFAGLLIAAYGYWLISHWPVDLLADRHNILGLFTVPAMHTDLVVAGLGLGLVIGPLSSATLRVVPSAQHGIASAAVVVARMTGMLIGVAALSAWGLYRFNQILAGLSAAIPPNASLLERAAAIGARYQQAFALMYGEIFTITAIVCVFGAVLGLLISGRKEHADEPEVQEQPTLAPQVEPL.

14 helical membrane passes run 7–27 (VAISAGSLAVLLGALDTYVVV), 46–66 (RITWIVTMYLLGYIAAMPLLG), 76–96 (LMLQVSLAGFIIGSVVTALAG), 110–130 (IQGVASGALLPITLALGADLW), 144–164 (AAQELGSVLGPLYGIFIVWLL), 170–190 (VFWINVPLTAIAMVMIHFSLP), 201–221 (VDLVGGLLLALALGLAVIGLY), 230–250 (VLPDYGAPLLVGALVAAVAFF), 270–290 (PFLSALGASVAAGAALMVTLV), 308–328 (AGMLLWFLIALPIGAVTGGWI), 337–357 (VAFAGLLIAAYGYWLISHWPV), 379–401 (LVVAGLGLGLVIGPLSSATLRVV), 408–428 (IASAAVVVARMTGMLIGVAAL), and 475–495 (IFTITAIVCVFGAVLGLLISG).

The protein belongs to the major facilitator superfamily.

The protein localises to the cell inner membrane. Inhibited by CCCP and valinomycin. In terms of biological role, in association with lipoprotein LprG probably transports triacylglycerides (TAG) across the inner cell membrane into the periplasm; TAG probably regulates lipid metabolism and growth regulation. Confers resistance to several drugs such as rifampicin, clofazimine and novobiocin; is also part of the oxidative stress response and is needed to maintain normal growth characteristics. Probably an efflux transporter, involved in maintaining correct cell wall permeability. Probably required with LprG for normal surface localization of lipoarabinomannan (LAM). Required for optimal growth on cholesterol. The polypeptide is Probable triacylglyceride transporter BCG_1471c (Mycobacterium bovis (strain BCG / Pasteur 1173P2)).